Reading from the N-terminus, the 572-residue chain is Proline--tRNA ligase (572 aa).

The protein belongs to the class-II aminoacyl-tRNA synthetase family. ProS type 1 subfamily. In terms of assembly, homodimer.

It is found in the cytoplasm. The catalysed reaction is tRNA(Pro) + L-proline + ATP = L-prolyl-tRNA(Pro) + AMP + diphosphate. Catalyzes the attachment of proline to tRNA(Pro) in a two-step reaction: proline is first activated by ATP to form Pro-AMP and then transferred to the acceptor end of tRNA(Pro). As ProRS can inadvertently accommodate and process non-cognate amino acids such as alanine and cysteine, to avoid such errors it has two additional distinct editing activities against alanine. One activity is designated as 'pretransfer' editing and involves the tRNA(Pro)-independent hydrolysis of activated Ala-AMP. The other activity is designated 'posttransfer' editing and involves deacylation of mischarged Ala-tRNA(Pro). The misacylated Cys-tRNA(Pro) is not edited by ProRS. This chain is Proline--tRNA ligase, found in Erwinia tasmaniensis (strain DSM 17950 / CFBP 7177 / CIP 109463 / NCPPB 4357 / Et1/99).